The following is a 447-amino-acid chain: Trigger factor (447 aa).

The PPIase FKBP-type domain occupies 159-244 (GDMLLMQVES…VREIKEEKLP (86 aa)).

This sequence belongs to the FKBP-type PPIase family. Tig subfamily.

The protein resides in the cytoplasm. It carries out the reaction [protein]-peptidylproline (omega=180) = [protein]-peptidylproline (omega=0). Involved in protein export. Acts as a chaperone by maintaining the newly synthesized protein in an open conformation. Functions as a peptidyl-prolyl cis-trans isomerase. This Dehalococcoides mccartyi (strain CBDB1) protein is Trigger factor.